We begin with the raw amino-acid sequence, 576 residues long: Proline--tRNA ligase (576 aa).

Belongs to the class-II aminoacyl-tRNA synthetase family. ProS type 1 subfamily. As to quaternary structure, homodimer.

The protein localises to the cytoplasm. It catalyses the reaction tRNA(Pro) + L-proline + ATP = L-prolyl-tRNA(Pro) + AMP + diphosphate. Its function is as follows. Catalyzes the attachment of proline to tRNA(Pro) in a two-step reaction: proline is first activated by ATP to form Pro-AMP and then transferred to the acceptor end of tRNA(Pro). As ProRS can inadvertently accommodate and process non-cognate amino acids such as alanine and cysteine, to avoid such errors it has two additional distinct editing activities against alanine. One activity is designated as 'pretransfer' editing and involves the tRNA(Pro)-independent hydrolysis of activated Ala-AMP. The other activity is designated 'posttransfer' editing and involves deacylation of mischarged Ala-tRNA(Pro). The misacylated Cys-tRNA(Pro) is not edited by ProRS. This Bordetella parapertussis (strain 12822 / ATCC BAA-587 / NCTC 13253) protein is Proline--tRNA ligase.